The primary structure comprises 790 residues: Sodium- and chloride-dependent glycine transporter 2 (790 aa).

Residues 1-39 are disordered; the sequence is MDYVNVVDGSKKTMNSPEGAAPGLIGATGITNPTPDNDL. The Cytoplasmic portion of the chain corresponds to 1-192; sequence MDYVNVVDGS…ARGNWSNKLD (192 aa). A run of 3 helical transmembrane segments spans residues 193 to 213, 220 to 240, and 264 to 284; these read FILS…FPYL, GAFL…IFYL, and GCGI…NIIM. Residues Gly-199, Ala-201, Val-202, and Asn-206 each contribute to the Na(+) site. Over 285 to 387 the chain is Extracellular; that stretch reads CYTIFYLFAS…GIEYPGEIRW (103 aa). Cys-304 and Cys-313 are joined by a disulfide. N-linked (GlcNAc...) asparagine glycosylation is found at Asn-336, Asn-346, Asn-351, and Asn-357. The next 3 helical transmembrane spans lie at 388–408, 427–447, and 463–483; these read PLVF…AKGI, VILL…WWFI, and AATQ…TLSS. 2 residues coordinate Na(+): Ser-470 and Asn-502. The next 6 helical transmembrane spans lie at 504–524, 556–576, 597–617, 631–651, 672–692, and 708–728; these read ATSI…AHIL, WAII…FATI, LFTL…ITQG, SYSL…IYGL, ICWA…SFYQ, and MVMG…MFVI. Positions 567 and 570 each coordinate Na(+). Residues 729–790 lie on the Cytoplasmic side of the membrane; it reads KMFLAPGTFI…PKDFELGTQC (62 aa).

Belongs to the sodium:neurotransmitter symporter (SNF) (TC 2.A.22) family. SLC6A5 subfamily. In terms of tissue distribution, first expressed in late neurula stages in the anterior spinal cord, where expression intensifies through the tailbud stages, and by hatching, expression is seen in the hindbrain. During late hatching stages, expression extends along most of the length of the spinal cord, mildly intensifies in the hindbrain, and appears in localized regions of the lateral forebrain and medial midbrain. By the swimming tadpole stage, weak expression appears in the anterior hindbrain, with stronger expression in the posterior, postmitotic neurons.

The protein resides in the cell membrane. The enzyme catalyses glycine(out) + chloride(out) + 3 Na(+)(out) = glycine(in) + chloride(in) + 3 Na(+)(in). Sodium- and chloride-dependent glycine transporter. Terminates the action of glycine by its high affinity sodium-dependent reuptake into presynaptic terminals. May be responsible for the termination of neurotransmission at strychnine-sensitive glycinergic synapses. In Xenopus laevis (African clawed frog), this protein is Sodium- and chloride-dependent glycine transporter 2.